We begin with the raw amino-acid sequence, 333 residues long: 4-hydroxythreonine-4-phosphate dehydrogenase (333 aa).

Residues His-133 and Thr-134 each coordinate substrate. Residues His-169, His-214, and His-269 each coordinate a divalent metal cation. Positions 277, 286, and 295 each coordinate substrate.

It belongs to the PdxA family. In terms of assembly, homodimer. Zn(2+) is required as a cofactor. It depends on Mg(2+) as a cofactor. Co(2+) serves as cofactor.

The protein resides in the cytoplasm. It carries out the reaction 4-(phosphooxy)-L-threonine + NAD(+) = 3-amino-2-oxopropyl phosphate + CO2 + NADH. Its pathway is cofactor biosynthesis; pyridoxine 5'-phosphate biosynthesis; pyridoxine 5'-phosphate from D-erythrose 4-phosphate: step 4/5. Catalyzes the NAD(P)-dependent oxidation of 4-(phosphooxy)-L-threonine (HTP) into 2-amino-3-oxo-4-(phosphooxy)butyric acid which spontaneously decarboxylates to form 3-amino-2-oxopropyl phosphate (AHAP). The protein is 4-hydroxythreonine-4-phosphate dehydrogenase of Caulobacter vibrioides (strain ATCC 19089 / CIP 103742 / CB 15) (Caulobacter crescentus).